A 274-amino-acid chain; its full sequence is Probable starch degradation products transport system permease protein AmyC (274 aa).

6 helical membrane-spanning segments follow: residues 11–31, 73–93, 103–123, 139–159, 184–204, and 238–258; these read LTFL…IILV, LIIT…TAYA, VIIY…VMIP, LVFM…YGAL, IILP…IMWI, and WNLG…FYFL. The ABC transmembrane type-1 domain maps to 69 to 259; that stretch reads FSNTLIITVF…LPVVIFYFLA (191 aa).

It belongs to the binding-protein-dependent transport system permease family. MalFG subfamily.

Its subcellular location is the cell membrane. Functionally, probably part of a binding-protein-dependent transport system starch degradation products. Probably responsible for the translocation of the substrate across the membrane. This is Probable starch degradation products transport system permease protein AmyC (amyC) from Thermoanaerobacterium thermosulfurigenes (Clostridium thermosulfurogenes).